The following is a 398-amino-acid chain: Succinate--CoA ligase [ADP-forming] subunit beta (398 aa).

The ATP-grasp domain occupies 9 to 254 (KRLLHEYGAP…LSEEDPKEIE (246 aa)). Residues Lys46, 53 to 55 (GRG), Glu109, Ala112, and Glu117 each bind ATP. Residues Asn209 and Asp223 each contribute to the Mg(2+) site. Residues Asn274 and 331–333 (GIM) each bind substrate.

Belongs to the succinate/malate CoA ligase beta subunit family. As to quaternary structure, heterotetramer of two alpha and two beta subunits. The cofactor is Mg(2+).

The enzyme catalyses succinate + ATP + CoA = succinyl-CoA + ADP + phosphate. The catalysed reaction is GTP + succinate + CoA = succinyl-CoA + GDP + phosphate. The protein operates within carbohydrate metabolism; tricarboxylic acid cycle; succinate from succinyl-CoA (ligase route): step 1/1. Its function is as follows. Succinyl-CoA synthetase functions in the citric acid cycle (TCA), coupling the hydrolysis of succinyl-CoA to the synthesis of either ATP or GTP and thus represents the only step of substrate-level phosphorylation in the TCA. The beta subunit provides nucleotide specificity of the enzyme and binds the substrate succinate, while the binding sites for coenzyme A and phosphate are found in the alpha subunit. In Bartonella tribocorum (strain CIP 105476 / IBS 506), this protein is Succinate--CoA ligase [ADP-forming] subunit beta.